Consider the following 251-residue polypeptide: Hydroxyacylglutathione hydrolase (251 aa).

Residues H53, H55, D57, H58, H110, D127, and H165 each contribute to the Zn(2+) site.

This sequence belongs to the metallo-beta-lactamase superfamily. Glyoxalase II family. As to quaternary structure, monomer. It depends on Zn(2+) as a cofactor.

The enzyme catalyses an S-(2-hydroxyacyl)glutathione + H2O = a 2-hydroxy carboxylate + glutathione + H(+). The protein operates within secondary metabolite metabolism; methylglyoxal degradation; (R)-lactate from methylglyoxal: step 2/2. Its function is as follows. Thiolesterase that catalyzes the hydrolysis of S-D-lactoyl-glutathione to form glutathione and D-lactic acid. The protein is Hydroxyacylglutathione hydrolase of Salmonella agona (strain SL483).